The following is a 449-amino-acid chain: Alpha-L-fucosidase (449 aa).

The first 19 residues, 1–19 (MGLLLLLSLLSACFQPRYA), serve as a signal peptide directing secretion. Asn156, Asn224, Asn362, and Asn375 each carry an N-linked (GlcNAc...) asparagine glycan.

It belongs to the glycosyl hydrolase 29 family. Homotetramer.

The protein resides in the secreted. It carries out the reaction an alpha-L-fucoside + H2O = L-fucose + an alcohol. Functionally, alpha-L-fucosidase is responsible for hydrolyzing the alpha-1,6-linked fucose joined to the reducing-end N-acetylglucosamine of the carbohydrate moieties of glycoproteins. The polypeptide is Alpha-L-fucosidase (Branchiostoma floridae (Florida lancelet)).